We begin with the raw amino-acid sequence, 83 residues long: Colicin-E5 immunity protein in ColE9 (83 aa).

The sequence is that of Colicin-E5 immunity protein in ColE9 from Escherichia coli.